The following is a 176-amino-acid chain: Probable DNA-directed RNA polymerase subunit delta (176 aa).

One can recognise an HTH HARE-type domain in the interval 14–81 (KSFIDMAYTL…GENLWGLRDW (68 aa)). Residues 114–176 (LGEDEMDDDD…VFEDEEDFND (63 aa)) form a disordered region. 2 stretches are compositionally biased toward acidic residues: residues 116 to 145 (EDEMDDDDDIPAQTDDQEELNDPEDEQVEE) and 153 to 176 (VIEEDEDELDEDEEVFEDEEDFND).

This sequence belongs to the RpoE family. As to quaternary structure, RNAP is composed of a core of 2 alpha, a beta and a beta' subunits. The core is associated with a delta subunit and one of several sigma factors.

Functionally, participates in both the initiation and recycling phases of transcription. In the presence of the delta subunit, RNAP displays an increased specificity of transcription, a decreased affinity for nucleic acids, and an increased efficiency of RNA synthesis because of enhanced recycling. The chain is Probable DNA-directed RNA polymerase subunit delta from Staphylococcus aureus (strain JH1).